A 215-amino-acid chain; its full sequence is ATP phosphoribosyltransferase (215 aa).

The protein belongs to the ATP phosphoribosyltransferase family. Short subfamily. As to quaternary structure, heteromultimer composed of HisG and HisZ subunits.

The protein localises to the cytoplasm. It carries out the reaction 1-(5-phospho-beta-D-ribosyl)-ATP + diphosphate = 5-phospho-alpha-D-ribose 1-diphosphate + ATP. It participates in amino-acid biosynthesis; L-histidine biosynthesis; L-histidine from 5-phospho-alpha-D-ribose 1-diphosphate: step 1/9. Catalyzes the condensation of ATP and 5-phosphoribose 1-diphosphate to form N'-(5'-phosphoribosyl)-ATP (PR-ATP). Has a crucial role in the pathway because the rate of histidine biosynthesis seems to be controlled primarily by regulation of HisG enzymatic activity. This chain is ATP phosphoribosyltransferase, found in Cyanothece sp. (strain PCC 7425 / ATCC 29141).